The sequence spans 339 residues: Phenylalanine--tRNA ligase alpha subunit (339 aa).

Mg(2+) is bound at residue Glu-253.

This sequence belongs to the class-II aminoacyl-tRNA synthetase family. Phe-tRNA synthetase alpha subunit type 1 subfamily. Tetramer of two alpha and two beta subunits. Requires Mg(2+) as cofactor.

The protein resides in the cytoplasm. The catalysed reaction is tRNA(Phe) + L-phenylalanine + ATP = L-phenylalanyl-tRNA(Phe) + AMP + diphosphate + H(+). The protein is Phenylalanine--tRNA ligase alpha subunit of Ruthia magnifica subsp. Calyptogena magnifica.